A 123-amino-acid chain; its full sequence is Large ribosomal subunit protein bL12 (123 aa).

It belongs to the bacterial ribosomal protein bL12 family. As to quaternary structure, homodimer. Part of the ribosomal stalk of the 50S ribosomal subunit. Forms a multimeric L10(L12)X complex, where L10 forms an elongated spine to which 2 to 4 L12 dimers bind in a sequential fashion. Binds GTP-bound translation factors.

Its function is as follows. Forms part of the ribosomal stalk which helps the ribosome interact with GTP-bound translation factors. Is thus essential for accurate translation. The sequence is that of Large ribosomal subunit protein bL12 from Aliarcobacter butzleri (strain RM4018) (Arcobacter butzleri).